A 111-amino-acid chain; its full sequence is Colicin-Ia immunity protein (111 aa).

The next 2 membrane-spanning stretches (helical) occupy residues 33–53 and 85–105; these read LLFW…KWYI and TGTV…SVII.

The protein localises to the cell membrane. Functionally, this protein is able to protect a cell, which harbors the plasmid ColIa-CA53 encoding colicin Ia, against colicin Ia. This is Colicin-Ia immunity protein from Escherichia coli.